A 220-amino-acid polypeptide reads, in one-letter code: Endonuclease NucS (220 aa).

The protein belongs to the NucS endonuclease family.

The protein resides in the cytoplasm. Cleaves both 3' and 5' ssDNA extremities of branched DNA structures. The polypeptide is Endonuclease NucS (Parafrankia sp. (strain EAN1pec)).